A 72-amino-acid chain; its full sequence is Conotoxin Gla(2)-TxVI/B (72 aa).

The signal sequence occupies residues 1-19; sequence MEKLIILLLVAAVLMSTQA. The propeptide occupies 20 to 44; that stretch reads LFQEKRTMKKIDFLSKGKADAEKQR. Intrachain disulfides connect Cys48-Cys62, Cys55-Cys66, and Cys61-Cys70. Glu56 carries the 4-carboxyglutamate modification. 4-hydroxyproline is present on Pro58. Serine amide is present on Ser71.

Post-translationally, brominated at one of the Trp residues. Expressed by the venom duct.

It is found in the secreted. The sequence is that of Conotoxin Gla(2)-TxVI/B from Conus textile (Cloth-of-gold cone).